Here is a 61-residue protein sequence, read N- to C-terminus: UPF0434 protein PSEEN1604 (61 aa).

The protein belongs to the UPF0434 family.

This chain is UPF0434 protein PSEEN1604, found in Pseudomonas entomophila (strain L48).